Consider the following 45-residue polypeptide: Large ribosomal subunit protein bL36 (45 aa).

Residues 26–45 (VINKKDPNRKQRQKGPARKK) are disordered. The segment covering 35–45 (KQRQKGPARKK) has biased composition (basic residues).

The protein belongs to the bacterial ribosomal protein bL36 family.

The sequence is that of Large ribosomal subunit protein bL36 from Protochlamydia amoebophila (strain UWE25).